A 469-amino-acid chain; its full sequence is 3-isopropylmalate dehydratase large subunit (469 aa).

[4Fe-4S] cluster contacts are provided by cysteine 349, cysteine 409, and cysteine 412.

Belongs to the aconitase/IPM isomerase family. LeuC type 1 subfamily. In terms of assembly, heterodimer of LeuC and LeuD. It depends on [4Fe-4S] cluster as a cofactor.

It catalyses the reaction (2R,3S)-3-isopropylmalate = (2S)-2-isopropylmalate. It participates in amino-acid biosynthesis; L-leucine biosynthesis; L-leucine from 3-methyl-2-oxobutanoate: step 2/4. Functionally, catalyzes the isomerization between 2-isopropylmalate and 3-isopropylmalate, via the formation of 2-isopropylmaleate. This chain is 3-isopropylmalate dehydratase large subunit, found in Methylorubrum extorquens (strain CM4 / NCIMB 13688) (Methylobacterium extorquens).